The primary structure comprises 207 residues: MKKNIISIIIVCLSFLTSIILYQYLPEEIPIQWSGNKPAAIVSKPLTIFIIPVVMLIYYLTFYMLTIKSTQKNKALLFLASNNMLILLYILQLSTLLISLGYEVNIDLIIGLGVGIFLIIGGNSMQLAEQNHLIGLRTPWTLKDETVWKLGNRFASKVLVVCGFIIAVLSFFTGEYIILIMIVLVLLALVISTLASYHYYKKLNGSR.

The next 6 membrane-spanning stretches (helical) occupy residues 5–25 (IISIIIVCLSFLTSIILYQYL), 47–67 (TIFIIPVVMLIYYLTFYMLTI), 78–98 (FLASNNMLILLYILQLSTLLI), 100–120 (LGYEVNIDLIIGLGVGIFLII), 150–170 (LGNRFASKVLVVCGFIIAVLS), and 171–191 (FFTGEYIILIMIVLVLLALVI).

It is found in the membrane. Functionally, immunity protein that provides protection for the cell against the toxic effects of SDP, its own SdpC-derived killing factor, and that functions as a receptor/signal transduction protein as well. Once SDP accumulates in the extracellular milieu, SdpI binds to SDP, causing sequestration of SdpR at the bacterial membrane. The polypeptide is Immunity protein SdpI (sdpI) (Bacillus subtilis (strain 168)).